A 52-amino-acid polypeptide reads, in one-letter code: Unknown protein from spot 415 of 2D-PAGE of etiolated coleoptile (52 aa).

This chain is Unknown protein from spot 415 of 2D-PAGE of etiolated coleoptile, found in Zea mays (Maize).